We begin with the raw amino-acid sequence, 146 residues long: UPF0178 protein BCE33L2782 (146 aa).

Belongs to the UPF0178 family.

This Bacillus cereus (strain ZK / E33L) protein is UPF0178 protein BCE33L2782.